The sequence spans 219 residues: Uracil-DNA glycosylase (219 aa).

Catalysis depends on Asp61, which acts as the Proton acceptor.

The protein belongs to the uracil-DNA glycosylase (UDG) superfamily. UNG family.

Its subcellular location is the cytoplasm. The catalysed reaction is Hydrolyzes single-stranded DNA or mismatched double-stranded DNA and polynucleotides, releasing free uracil.. In terms of biological role, excises uracil residues from the DNA which can arise as a result of misincorporation of dUMP residues by DNA polymerase or due to deamination of cytosine. This Haemophilus influenzae (strain 86-028NP) protein is Uracil-DNA glycosylase.